The sequence spans 609 residues: Glutamine--fructose-6-phosphate aminotransferase [isomerizing] (609 aa).

Cysteine 2 (nucleophile; for GATase activity) is an active-site residue. Residues 2–217 form the Glutamine amidotransferase type-2 domain; that stretch reads CGIVGAIAGR…DGDTAEIRRD (216 aa). SIS domains lie at 285–425 and 458–599; these read AESV…LRGA and WAEC…VDKP. Catalysis depends on lysine 604, which acts as the For Fru-6P isomerization activity.

Homodimer.

It is found in the cytoplasm. The catalysed reaction is D-fructose 6-phosphate + L-glutamine = D-glucosamine 6-phosphate + L-glutamate. Functionally, catalyzes the first step in hexosamine metabolism, converting fructose-6P into glucosamine-6P using glutamine as a nitrogen source. The protein is Glutamine--fructose-6-phosphate aminotransferase [isomerizing] of Xylella fastidiosa (strain Temecula1 / ATCC 700964).